The following is a 753-amino-acid chain: Probable TonB-dependent siderophore receptor PiuA (753 aa).

The signal sequence occupies residues 1 to 35 (MSRQSTDTAVSSQRLLASAIGVAITAIAAPQAAQA). The TBDR plug domain occupies 79-185 (PLLDTPKTVT…TGGSLNLISK (107 aa)). Positions 190–753 (DNFTDAGFTW…TALLGVNFHF (564 aa)) constitute a TBDR beta-barrel domain. Cys-420 and Cys-430 form a disulfide bridge.

It belongs to the TonB-dependent receptor family.

It localises to the cell outer membrane. In terms of biological role, involved in the initial step of iron uptake by binding iron chelating siderophores, thereby allowing extraction of iron from the environment. Probably involved in the transport of siderophores, including host catecholamines such as dopamine. In Pseudomonas aeruginosa (strain ATCC 15692 / DSM 22644 / CIP 104116 / JCM 14847 / LMG 12228 / 1C / PRS 101 / PAO1), this protein is Probable TonB-dependent siderophore receptor PiuA.